Here is a 145-residue protein sequence, read N- to C-terminus: Small ribosomal subunit protein uS12 (145 aa).

Proline 64 is subject to Hydroxyproline.

Belongs to the universal ribosomal protein uS12 family.

The polypeptide is Small ribosomal subunit protein uS12 (rps23) (Aspergillus fumigatus (strain ATCC MYA-4609 / CBS 101355 / FGSC A1100 / Af293) (Neosartorya fumigata)).